The primary structure comprises 313 residues: Small ribosomal subunit protein uS2 (313 aa).

The span at 228 to 256 (RQEDKAAEAQDKDAQDTEDNKGARPRGAE) shows a compositional bias: basic and acidic residues. Residues 228–313 (RQEDKAAEAQ…VSKAGDKPKK (86 aa)) are disordered.

It belongs to the universal ribosomal protein uS2 family.

The protein is Small ribosomal subunit protein uS2 of Amoebophilus asiaticus (strain 5a2).